The primary structure comprises 783 residues: MWIKLLFFFTTLLVSTSGLGDDGITALLDPNSTEFSTVLPSNNSEKFSYMLASVKNMNMTASEFEEFIKVLKHRQSKDHSGEHVGNEHDESHGISVVSWHWDYVKNELVLTLFFIVIGLFKLVYHHTFVTRKILPESCCLIFIGIAIGFFFVGDATHASIKFLEFKSKVFFFYLLPPIILESAYSLKDRAFIENIGTILLYAVVGTILNIVLLAAALLILIWVGIMGKYNLSVMDILTFASLVAAVDPVAVLAVFQEVGVNKMLYFMVFGESLFNDAVTIVCYNLAIEFQTLPDFTWYHGFLGLLSFLCVSIGGLIIGLICGAISSFVTKFTTDVRVVEPVVLFGMAYLAYLGSEMFHFSGIIALIACGLFQTHYACCNISYKSFTSVMYITKVCSTLCESLIFIILGVMLVNEREWFWTDWHPVFSAVSVVLCVVVRFGVTFFLTYFVNQFTGGVRHISFQEQFIMSYGGLRGAVSFSLVFMISANPDVKNTMLGATYAVILFTNIIQGSTIKLFVKWLNIRLAKKEDHFRLFIEFNNGMVQHLSQGIEDLCGDKSLSLINRMSELSKKYVRPLLEKNYTANKAKKEGKLVELNRAVAMREALNNSPSQSSFQRQHTIDEMAESGALPHDLLDEEHQGHHHHGQVHPDNEDADQRANELIKDVSSIRQLMHNPFEDCYLDRNLTHEEEKEQARLKMKKTRAFKFSSVRKTIGFFGKKKSVRRHATQQGILHSAIATIGVQSVDRPSTSTRVSVEDEEQGLTMKEMEEEHPLMTITESEETSF.

Residues 1-18 (MWIKLLFFFTTLLVSTSG) form a helical membrane-spanning segment. The Extracellular segment spans residues 19–108 (LGDDGITALL…WHWDYVKNEL (90 aa)). The chain crosses the membrane as a helical span at residues 109-129 (VLTLFFIVIGLFKLVYHHTFV). At 130-132 (TRK) the chain is on the cytoplasmic side. The chain crosses the membrane as a helical span at residues 133-153 (ILPESCCLIFIGIAIGFFFVG). Residues 154 to 159 (DATHAS) are Extracellular-facing. The helical transmembrane segment at 160 to 180 (IKFLEFKSKVFFFYLLPPIIL) threads the bilayer. The Cytoplasmic segment spans residues 181–206 (ESAYSLKDRAFIENIGTILLYAVVGT). A helical membrane pass occupies residues 207 to 227 (ILNIVLLAAALLILIWVGIMG). Over 228-235 (KYNLSVMD) the chain is Extracellular. A helical membrane pass occupies residues 236-256 (ILTFASLVAAVDPVAVLAVFQ). Topologically, residues 257–262 (EVGVNK) are cytoplasmic. The helical transmembrane segment at 263 to 283 (MLYFMVFGESLFNDAVTIVCY) threads the bilayer. Over 284–299 (NLAIEFQTLPDFTWYH) the chain is Extracellular. Residues 300–320 (GFLGLLSFLCVSIGGLIIGLI) traverse the membrane as a helical segment. Residues 321-350 (CGAISSFVTKFTTDVRVVEPVVLFGMAYLA) lie on the Cytoplasmic side of the membrane. A helical membrane pass occupies residues 351–371 (YLGSEMFHFSGIIALIACGLF). The Extracellular segment spans residues 372 to 390 (QTHYACCNISYKSFTSVMY). An N-linked (GlcNAc...) asparagine glycan is attached at N379. The segment at residues 391-411 (ITKVCSTLCESLIFIILGVML) is an intramembrane region (helical). Over 412 to 424 (VNEREWFWTDWHP) the chain is Extracellular. The chain crosses the membrane as a helical span at residues 425-445 (VFSAVSVVLCVVVRFGVTFFL). At 446–464 (TYFVNQFTGGVRHISFQEQ) the chain is on the cytoplasmic side. Residues 465 to 485 (FIMSYGGLRGAVSFSLVFMIS) form a helical membrane-spanning segment. Residues 486–492 (ANPDVKN) are Extracellular-facing. Residues 493 to 513 (TMLGATYAVILFTNIIQGSTI) traverse the membrane as a helical segment. The Cytoplasmic segment spans residues 514-783 (KLFVKWLNIR…TITESEETSF (270 aa)). Residues 649–702 (DNEDADQRANELIKDVSSIRQLMHNPFEDCYLDRNLTHEEEKEQARLKMKKTRA) are a coiled coil. Residues 745–783 (RPSTSTRVSVEDEEQGLTMKEMEEEHPLMTITESEETSF) are disordered.

This sequence belongs to the monovalent cation:proton antiporter 1 (CPA1) transporter (TC 2.A.36) family. Interacts (via C-terminus) with cmd-1. As to expression, detected in the posterior cells of the intestine.

It is found in the basolateral cell membrane. Na+/H+ exchanger which mediates the transient acidification of the coelomic space and plays a role in contraction of posterior body muscles during defecation. Probably by regulating the defecation motor program, required for fatty acid uptake by intestinal cells. This chain is Na(+)/H(+) exchanger protein 7, found in Caenorhabditis elegans.